Consider the following 273-residue polypeptide: Large ribosomal subunit protein uL2 (273 aa).

2 disordered regions span residues 28 to 53 (KPFA…TTRH) and 221 to 273 (RGTA…RRSK). Low complexity predominate over residues 39 to 48 (KSGGRNNNGR). At K242 the chain carries N6-acetyllysine.

This sequence belongs to the universal ribosomal protein uL2 family. As to quaternary structure, part of the 50S ribosomal subunit. Forms a bridge to the 30S subunit in the 70S ribosome.

Its function is as follows. One of the primary rRNA binding proteins. Required for association of the 30S and 50S subunits to form the 70S ribosome, for tRNA binding and peptide bond formation. It has been suggested to have peptidyltransferase activity; this is somewhat controversial. Makes several contacts with the 16S rRNA in the 70S ribosome. The sequence is that of Large ribosomal subunit protein uL2 from Escherichia coli (strain SE11).